The sequence spans 2146 residues: YLP motif-containing protein 1 (2146 aa).

Disordered stretches follow at residues 1–381 and 562–880; these read MYPN…ARLK and PPVM…FKMQ. A compositionally biased stretch (pro residues) spans 14–26; that stretch reads YPPPPVPPPPPVA. Composition is skewed to low complexity over residues 27–48 and 58–79; these read LPEA…PSSS and LAQL…LQPH. Composition is skewed to pro residues over residues 80 to 92, 101 to 113, 147 to 157, 165 to 175, and 183 to 194; these read HLPP…PPVM, QPPP…PPGP, PESPPVPPGSY, MPPPQPPPSYY, and YLPPAQPSPSQS. The segment covering 195 to 237 has biased composition (low complexity); the sequence is PPSQSYLAPTPSYSSSSSSSQSYLSHSQSYLPSSQASPSRPSQ. Polar residues-rich tracts occupy residues 256–279 and 286–308; these read NKTT…QQQA and STMT…LQQR. A compositionally biased stretch (basic residues) spans 309–319; it reads TKVHLPGHKKG. Residues 325–334 show a composition bias toward basic and acidic residues; it reads DTPEPVKEEV. Pro residues-rich tracts occupy residues 349 to 368, 562 to 579, and 586 to 642; these read EEPP…PPEE, PPVM…PGMP, and GPPP…PQGI. A compositionally biased stretch (low complexity) spans 643–663; that stretch reads PPQLTAAPVPPASSSQSSQVP. Residues 692–702 show a composition bias toward polar residues; sequence AGPSEQVNSKA. The residue at position 735 (Lys735) is an N6-methyllysine. Ser756 carries the phosphoserine modification. Residues 758–806 are compositionally biased toward basic and acidic residues; the sequence is RGPRFDGPRRFEDLGSRCEGPRPKGPRFEGNRPDGPRPRYEGHPAEGTK. Arg814 bears the Omega-N-methylarginine mark. Composition is skewed to polar residues over residues 820–835 and 868–880; these read FYIT…QSGP and DTSS…FKMQ. Ser829 carries the post-translational modification Phosphoserine. Residue Arg831 is modified to Omega-N-methylarginine. A Glycyl lysine isopeptide (Lys-Gly) (interchain with G-Cter in SUMO2) cross-link involves residue Lys891. Disordered regions lie at residues 895–1211 and 1243–1351; these read AAQS…GRNA and NRED…DDRW. 2 stretches are compositionally biased toward polar residues: residues 896–909 and 923–933; these read AQSN…QQEP and NWDQNVQSMET. A Glycyl lysine isopeptide (Lys-Gly) (interchain with G-Cter in SUMO1); alternate cross-link involves residue Lys983. Lys983 participates in a covalent cross-link: Glycyl lysine isopeptide (Lys-Gly) (interchain with G-Cter in SUMO2); alternate. Basic and acidic residues-rich tracts occupy residues 994–1012, 1027–1036, and 1053–1093; these read NNQD…RLEG, RMEDTRDKGL, and KQED…REKV. Residue Lys1053 forms a Glycyl lysine isopeptide (Lys-Gly) (interchain with G-Cter in SUMO1); alternate linkage. Lys1053 is covalently cross-linked (Glycyl lysine isopeptide (Lys-Gly) (interchain with G-Cter in SUMO2); alternate). Phosphoserine is present on residues Ser1100 and Ser1119. Composition is skewed to basic and acidic residues over residues 1129 to 1211 and 1243 to 1264; these read GSRE…GRNA and NRED…RGPW. Over residues 1266–1276 the composition is skewed to acidic residues; it reads DDWERDQDMDE. Basic and acidic residues predominate over residues 1277–1328; the sequence is DYNREMERDMDRDVDRISRPMDMYDRSLDNEWDRDYGRPLDEQESQFRERDI. Positions 1330 to 1342 are enriched in pro residues; that stretch reads SLPPLPPLPPLPP. Ser1402 carries the post-translational modification Phosphoserine. 3 disordered regions span residues 1407 to 1438, 1469 to 1573, and 1602 to 1828; these read PSDV…SLDS, QKEQ…EQER, and IPSA…PPGR. Low complexity predominate over residues 1417 to 1430; it reads AEHMPSSHHSSEMM. Positions 1469-1480 are enriched in basic and acidic residues; that stretch reads QKEQLQKMKDFG. Residues 1505-1520 are compositionally biased toward pro residues; the sequence is MYPPPGSYRPPPPMGK. The segment covering 1521 to 1539 has biased composition (low complexity); the sequence is PPGSIVRPSAPPARSSVPV. Composition is skewed to pro residues over residues 1540–1562 and 1606–1636; these read TRPP…PPVI and PVLP…PPPV. Lys1652 is covalently cross-linked (Glycyl lysine isopeptide (Lys-Gly) (interchain with G-Cter in SUMO2)). 4 stretches are compositionally biased toward basic and acidic residues: residues 1662-1696, 1704-1774, 1783-1793, and 1809-1828; these read ITLR…EPYF, ADHR…DRPV, GERRTYPEERM, and RVEK…PPGR. Residue Lys1710 forms a Glycyl lysine isopeptide (Lys-Gly) (interchain with G-Cter in SUMO2) linkage. Residues 2096–2103 form an involved in interaction with PPP1CA region; the sequence is KKRVRWAD.

In terms of assembly, interacts with PPP1CA and NCOA5. Forms a complex with ILF2, ILF3, KHDRBS1, RBMX, NCOA5 and PPP1CA. In terms of tissue distribution, expressed in neuronal, neuroblastoma and embryonic kidney cell lines (at protein level).

It is found in the nucleus. It localises to the nucleus speckle. Its function is as follows. Plays a role in the reduction of telomerase activity during differentiation of embryonic stem cells by binding to the core promoter of TERT and controlling its down-regulation. The sequence is that of YLP motif-containing protein 1 (YLPM1) from Homo sapiens (Human).